A 281-amino-acid chain; its full sequence is Aldo-keto reductase MMAR_1744 (281 aa).

The active-site Proton donor is the Y56. Residues L196, I234, S237, T245, N246, and R272 each contribute to the NADPH site.

Belongs to the aldo/keto reductase family.

The protein is Aldo-keto reductase MMAR_1744 of Mycobacterium marinum (strain ATCC BAA-535 / M).